The chain runs to 884 residues: Translation initiation factor IF-2 (884 aa).

Disordered stretches follow at residues 42–62 (DVQK…QEEV) and 123–254 (EPKG…GGKK). The span at 194 to 212 (PAERREVVIPPKRKMEERA) shows a compositional bias: basic and acidic residues. Residues 234–248 (EPETPAGGAPGAKKG) are compositionally biased toward low complexity. The tr-type G domain occupies 384 to 553 (KRPPVVTIMG…LLQADVMDLK (170 aa)). The tract at residues 393 to 400 (GHVDHGKT) is G1. 393–400 (GHVDHGKT) provides a ligand contact to GTP. The interval 418 to 422 (GITQH) is G2. The interval 439–442 (DTPG) is G3. Residues 439-443 (DTPGH) and 493-496 (NKID) each bind GTP. Residues 493-496 (NKID) are G4. A G5 region spans residues 529 to 531 (SAK).

This sequence belongs to the TRAFAC class translation factor GTPase superfamily. Classic translation factor GTPase family. IF-2 subfamily.

It is found in the cytoplasm. Functionally, one of the essential components for the initiation of protein synthesis. Protects formylmethionyl-tRNA from spontaneous hydrolysis and promotes its binding to the 30S ribosomal subunits. Also involved in the hydrolysis of GTP during the formation of the 70S ribosomal complex. In Geobacter metallireducens (strain ATCC 53774 / DSM 7210 / GS-15), this protein is Translation initiation factor IF-2.